A 501-amino-acid polypeptide reads, in one-letter code: Cytochrome P450 81F4 (501 aa).

A Glycyl lysine isopeptide (Lys-Gly) (interchain with G-Cter in ubiquitin) cross-link involves residue Lys245. A helical membrane pass occupies residues Ile285–Thr305. Residue Cys435 coordinates heme.

Belongs to the cytochrome P450 family. Heme is required as a cofactor.

It is found in the membrane. It participates in secondary metabolite biosynthesis. Functionally, involved in indole glucosinolate biosynthesis. Catalyzes hydroxylation reactions of the glucosinolate indole ring. Converts indol-3-yl-methylglucosinolate (I3M) to 1-hydroxy-indol-3-yl-methylglucosinolate (1OH-I3M) intermediate. This hydroxy intermediates is converted to 1-methoxy-indol-3-yl-methylglucosinolate (1MO-I3M) by indole glucosinolate methyltransferase 1 and 2 (IGMT1 and IGMT2). This Arabidopsis thaliana (Mouse-ear cress) protein is Cytochrome P450 81F4.